A 161-amino-acid polypeptide reads, in one-letter code: 3-isopropylmalate dehydratase small subunit (161 aa).

This sequence belongs to the LeuD family. LeuD type 2 subfamily. Heterodimer of LeuC and LeuD.

It catalyses the reaction (2R,3S)-3-isopropylmalate = (2S)-2-isopropylmalate. It participates in amino-acid biosynthesis; L-leucine biosynthesis; L-leucine from 3-methyl-2-oxobutanoate: step 2/4. In terms of biological role, catalyzes the isomerization between 2-isopropylmalate and 3-isopropylmalate, via the formation of 2-isopropylmaleate. This chain is 3-isopropylmalate dehydratase small subunit (leuD), found in Caldanaerobacter subterraneus subsp. tengcongensis (strain DSM 15242 / JCM 11007 / NBRC 100824 / MB4) (Thermoanaerobacter tengcongensis).